A 485-amino-acid chain; its full sequence is Glutamyl-tRNA(Gln) amidotransferase subunit A (485 aa).

Residues Lys78 and Ser153 each act as charge relay system in the active site. Catalysis depends on Ser177, which acts as the Acyl-ester intermediate.

This sequence belongs to the amidase family. GatA subfamily. Heterotrimer of A, B and C subunits.

It carries out the reaction L-glutamyl-tRNA(Gln) + L-glutamine + ATP + H2O = L-glutaminyl-tRNA(Gln) + L-glutamate + ADP + phosphate + H(+). Allows the formation of correctly charged Gln-tRNA(Gln) through the transamidation of misacylated Glu-tRNA(Gln) in organisms which lack glutaminyl-tRNA synthetase. The reaction takes place in the presence of glutamine and ATP through an activated gamma-phospho-Glu-tRNA(Gln). The protein is Glutamyl-tRNA(Gln) amidotransferase subunit A of Bacillus cereus (strain AH820).